The chain runs to 296 residues: tRNA dimethylallyltransferase (296 aa).

ATP is bound at residue 19–26 (GPTASGKS). Position 21-26 (21-26 (TASGKS)) interacts with substrate.

This sequence belongs to the IPP transferase family. Monomer. The cofactor is Mg(2+).

It carries out the reaction adenosine(37) in tRNA + dimethylallyl diphosphate = N(6)-dimethylallyladenosine(37) in tRNA + diphosphate. Functionally, catalyzes the transfer of a dimethylallyl group onto the adenine at position 37 in tRNAs that read codons beginning with uridine, leading to the formation of N6-(dimethylallyl)adenosine (i(6)A). This is tRNA dimethylallyltransferase from Dinoroseobacter shibae (strain DSM 16493 / NCIMB 14021 / DFL 12).